Consider the following 88-residue polypeptide: Cell division topological specificity factor (88 aa).

It belongs to the MinE family.

Prevents the cell division inhibition by proteins MinC and MinD at internal division sites while permitting inhibition at polar sites. This ensures cell division at the proper site by restricting the formation of a division septum at the midpoint of the long axis of the cell. The polypeptide is Cell division topological specificity factor (Shewanella denitrificans (strain OS217 / ATCC BAA-1090 / DSM 15013)).